Reading from the N-terminus, the 60-residue chain is Cytotoxin SP15a (60 aa).

4 disulfides stabilise this stretch: Cys3–Cys21, Cys14–Cys38, Cys42–Cys53, and Cys54–Cys59.

Belongs to the three-finger toxin family. Short-chain subfamily. Type IA cytotoxin sub-subfamily. Monomer in solution; Homodimer and oligomer in the presence of negatively charged lipids forming a pore with a size ranging between 20 and 30 Angstroms. Expressed by the venom gland.

It localises to the secreted. The protein localises to the target cell membrane. Its function is as follows. Shows cytolytic activity on many different cells by forming pore in lipid membranes. In vivo, increases heart rate or kills the animal by cardiac arrest. In addition, it binds to heparin with high affinity, interacts with Kv channel-interacting protein 1 (KCNIP1) in a calcium-independent manner, and binds to integrin alpha-V/beta-3 (ITGAV/ITGB3) with moderate affinity. In Naja atra (Chinese cobra), this protein is Cytotoxin SP15a.